The chain runs to 519 residues: Cytochrome P450 monooxygenase apdE (519 aa).

The helical transmembrane segment at 27–47 (FVFFAFVVYSCFTIAVGWVVY) threads the bilayer. Residues N327 and N379 are each glycosylated (N-linked (GlcNAc...) asparagine). Heme is bound at residue C466. An N-linked (GlcNAc...) asparagine glycan is attached at N508.

The protein belongs to the cytochrome P450 family. Heme is required as a cofactor.

It localises to the membrane. It functions in the pathway secondary metabolite biosynthesis. Cytochrome P450 monooxygenase; part of the gene cluster that mediates the biosynthesis of aspyridones. The polyketide-amino acid backbone preaspyridone A is first assembled by the PKS-NRPS hybrid apdA. The assembly of preaspyridone A is initiated by loading of malonyl-CoA onto apdA, followed by decarboxylation to yield the acetyl starter unit. The growing polyketide chain then elongates into a tetraketide. The adpA PKS module catalyzes three Claisen condensations, as well as beta-keto processing and methylation. Alpha-methylation step during polyketide synthesis is a prerequisite and a key checkpoint for chain transfer between PKS and NRPS modules. The downstream NRPS module contains the condensation (C), adenylation (A), and thiolation (T) domains and catalyzes the incorporation of tyrosine via the formation of the L-tyrosinyl-thioester and the amide linkage between L-tyrosinyl-thioester and the tetraketide. The bimodular assembly line is terminated with a reductase (R) domain that facilitates formation and release of the tetramic acid product. Because apdA lacks a designated enoylreductase (ER) domain, the required activity is provided the enoyl reductase apdC. ApdC appears to operate with different stereoselectivity in different PKS cycle. Combined with apdC, apdA is proposed to synthesize preaspyridone A via about 20 enzymatic steps. A number of oxidative steps performed successively by the cytochrome P450 monooxygenases apdE and apdB are required for the conversion of preaspyridone A to aspyridone A. The cytochrome P450 monooxygenase apdE is responsible for the oxidative dephenylation of preaspyridone A. Finally, the predicted FAD-dependent monooxygenase apdD and the acyl-CoA dehydrogenase apdG may be involved in the transformation of aspyridone A into aspyridone B. In Emericella nidulans (strain FGSC A4 / ATCC 38163 / CBS 112.46 / NRRL 194 / M139) (Aspergillus nidulans), this protein is Cytochrome P450 monooxygenase apdE.